A 310-amino-acid chain; its full sequence is Olfactory receptor 5P80 (310 aa).

At 1 to 25 the chain is on the extracellular side; sequence MEPGNYTVVTEVILLGFTEDAIIRA. N5 is a glycosylation site (N-linked (GlcNAc...) asparagine). A helical membrane pass occupies residues 26 to 46; sequence ILFIVFLIIYSVTLMGNASII. Over 47 to 54 the chain is Cytoplasmic; the sequence is MLIRRSPQ. Residues 55-75 form a helical membrane-spanning segment; it reads LHTPMYLLLSHLAFVDIGYSS. The Extracellular segment spans residues 76 to 99; sequence SVTPIMLKGFLRKETFILVSGCVA. Residues C97 and C189 are joined by a disulfide bond. The chain crosses the membrane as a helical span at residues 100–120; sequence QLCSVVTFGSTECFLLAAMAY. Residues 121–133 are Cytoplasmic-facing; that stretch reads DRYVAICSPLLYA. A helical transmembrane segment spans residues 134-154; sequence TQMSSTVCILLVGASYLGGCV. Residues 155-196 are Extracellular-facing; sequence NAWTFTGCLLNLSFCRPNKVNHFFCDYSPLLKISCSHDFSSE. An N-linked (GlcNAc...) asparagine glycan is attached at N165. A helical membrane pass occupies residues 197–217; sequence VIPAISSGSIIVVTVFIIALS. The Cytoplasmic segment spans residues 218–237; it reads YVYILVSILKMRSTEGRQKA. Residues 238–258 traverse the membrane as a helical segment; sequence FSTCTSHLTAVTLFYGTITFI. Residues 259-271 lie on the Extracellular side of the membrane; that stretch reads YVMPKSSYSTDQN. Residues 272 to 292 form a helical membrane-spanning segment; sequence KVVSVFYTVVIPMLNPIIYSL. At 293 to 310 the chain is on the cytoplasmic side; it reads RNKDVKEAMKKLMANTHH.

The protein belongs to the G-protein coupled receptor 1 family.

The protein localises to the cell membrane. Its function is as follows. Potential odorant receptor. In Mus musculus (Mouse), this protein is Olfactory receptor 5P80.